We begin with the raw amino-acid sequence, 69 residues long: DNA gyrase inhibitor YacG (69 aa).

4 residues coordinate Zn(2+): C7, C10, C26, and C30.

This sequence belongs to the DNA gyrase inhibitor YacG family. Interacts with GyrB. The cofactor is Zn(2+).

In terms of biological role, inhibits all the catalytic activities of DNA gyrase by preventing its interaction with DNA. Acts by binding directly to the C-terminal domain of GyrB, which probably disrupts DNA binding by the gyrase. In Shewanella baltica (strain OS195), this protein is DNA gyrase inhibitor YacG.